An 807-amino-acid polypeptide reads, in one-letter code: Dual specificity protein kinase YAK1 (807 aa).

Residues 1–19 (MNSSNNNDSSSSNSNMNNS) show a composition bias toward low complexity. Positions 1–84 (MNSSNNNDSS…QQQQQQQQNS (84 aa)) are disordered. Residues 20 to 31 (LSPTLVTHSDAS) show a composition bias toward polar residues. Phosphoserine is present on Ser38. Positions 55–84 (NQGSQRSPQQQHQNHHQQQQQQQQQQQQNS) are enriched in low complexity. A phosphoserine mark is found at Ser115, Ser118, and Ser127. A disordered region spans residues 124-180 (RRKSSLVVPPARAPAPNPFQYDSYPAYTSSNTSLAGNSSGQYPSGYQQQQQQVYQQG). Polar residues predominate over residues 149 to 160 (AYTSSNTSLAGN). Residues 161 to 180 (SSGQYPSGYQQQQQQVYQQG) are compositionally biased toward low complexity. Ser206 carries the phosphoserine modification. Low complexity predominate over residues 214–224 (SNFSSLNSNTN). The segment at 214 to 254 (SNFSSLNSNTNQGTNSIPVMSPYRRLSAYPPSTSPPLQPPF) is disordered. Ser240, Ser245, and Ser247 each carry phosphoserine. Thr288 is modified (phosphothreonine). Ser295 carries the phosphoserine modification. The Protein kinase domain occupies 369–704 (YLVLDILGQG…PQQAMLHPFI (336 aa)). ATP-binding positions include 375–383 (LGQGTFGQV) and Lys398. Asp496 serves as the catalytic Proton acceptor. The residue at position 530 (Tyr530) is a Phosphotyrosine. The segment at 714–758 (FPPGSSLPGPSEKHDDAKGQQSEYGSANDSSNNAGHNYVYNPSSA) is disordered. A compositionally biased stretch (polar residues) spans 732–758 (GQQSEYGSANDSSNNAGHNYVYNPSSA).

The protein belongs to the protein kinase superfamily. CMGC Ser/Thr protein kinase family. MNB/DYRK subfamily. In terms of processing, phosphorylated; highly.

Its subcellular location is the cytoplasm. The protein resides in the nucleus. The enzyme catalyses L-seryl-[protein] + ATP = O-phospho-L-seryl-[protein] + ADP + H(+). It carries out the reaction L-threonyl-[protein] + ATP = O-phospho-L-threonyl-[protein] + ADP + H(+). It catalyses the reaction L-tyrosyl-[protein] + ATP = O-phospho-L-tyrosyl-[protein] + ADP + H(+). In terms of biological role, negative regulator of the cell cycle acting downstream of the cAMP-dependent protein kinase. Part of a glucose-sensing system involved in growth control in response to glucose availability. Phosphorylates POP2. The chain is Dual specificity protein kinase YAK1 (YAK1) from Saccharomyces cerevisiae (strain ATCC 204508 / S288c) (Baker's yeast).